The following is a 286-amino-acid chain: tRNA (guanine-N(7)-)-methyltransferase (286 aa).

Phosphoserine is present on residues Ser-7 and Ser-59. Residues Gly-103, 126–127, 161–162, and Cys-181 contribute to the S-adenosyl-L-methionine site; these read EI and NA. Residue Asp-184 is part of the active site. 259–261 is a binding site for S-adenosyl-L-methionine; the sequence is TEE.

Belongs to the class I-like SAM-binding methyltransferase superfamily. TrmB family. Forms a complex with TRM82.

The protein resides in the nucleus. The enzyme catalyses guanosine(46) in tRNA + S-adenosyl-L-methionine = N(7)-methylguanosine(46) in tRNA + S-adenosyl-L-homocysteine. The protein operates within tRNA modification; N(7)-methylguanine-tRNA biosynthesis. Its function is as follows. Methyltransferase that catalyzes the formation of N(7)-methylguanine at position 46 (m7G46) in tRNA, a modification required to maintain stability of tRNAs; its absence resulting in tRNA decay. Both the D-stem and T-stem structures of tRNAs are required for efficient methyltransferase activity. This chain is tRNA (guanine-N(7)-)-methyltransferase, found in Saccharomyces cerevisiae (strain YJM789) (Baker's yeast).